The sequence spans 227 residues: PKHD-type hydroxylase A1S_0473 (227 aa).

A Fe2OG dioxygenase domain is found at 78–178 (KIIPPLFNRY…RFASFFWVQS (101 aa)). Fe cation-binding residues include His96, Asp98, and His159. Arg169 is a 2-oxoglutarate binding site.

Fe(2+) serves as cofactor. Requires L-ascorbate as cofactor.

This Acinetobacter baumannii (strain ATCC 17978 / DSM 105126 / CIP 53.77 / LMG 1025 / NCDC KC755 / 5377) protein is PKHD-type hydroxylase A1S_0473.